Consider the following 264-residue polypeptide: Thymidylate synthase (264 aa).

Arg-21 provides a ligand contact to dUMP. His-51 contributes to the (6R)-5,10-methylene-5,6,7,8-tetrahydrofolate binding site. 126-127 (RR) is a dUMP binding site. Residue Cys-146 is the Nucleophile of the active site. DUMP is bound by residues 166–169 (RSAD), Asn-177, and 207–209 (HLY). Asp-169 serves as a coordination point for (6R)-5,10-methylene-5,6,7,8-tetrahydrofolate. Residue Ala-263 participates in (6R)-5,10-methylene-5,6,7,8-tetrahydrofolate binding.

Belongs to the thymidylate synthase family. Bacterial-type ThyA subfamily. In terms of assembly, homodimer.

It localises to the cytoplasm. It catalyses the reaction dUMP + (6R)-5,10-methylene-5,6,7,8-tetrahydrofolate = 7,8-dihydrofolate + dTMP. The protein operates within pyrimidine metabolism; dTTP biosynthesis. Catalyzes the reductive methylation of 2'-deoxyuridine-5'-monophosphate (dUMP) to 2'-deoxythymidine-5'-monophosphate (dTMP) while utilizing 5,10-methylenetetrahydrofolate (mTHF) as the methyl donor and reductant in the reaction, yielding dihydrofolate (DHF) as a by-product. This enzymatic reaction provides an intracellular de novo source of dTMP, an essential precursor for DNA biosynthesis. The polypeptide is Thymidylate synthase (Chelativorans sp. (strain BNC1)).